A 96-amino-acid polypeptide reads, in one-letter code: Nucleoid-associated protein CCA_00330 (96 aa).

Belongs to the YbaB/EbfC family. As to quaternary structure, homodimer.

The protein localises to the cytoplasm. The protein resides in the nucleoid. Functionally, binds to DNA and alters its conformation. May be involved in regulation of gene expression, nucleoid organization and DNA protection. The chain is Nucleoid-associated protein CCA_00330 from Chlamydia caviae (strain ATCC VR-813 / DSM 19441 / 03DC25 / GPIC) (Chlamydophila caviae).